The following is a 383-amino-acid chain: Delta(12)-fatty-acid desaturase FAD2 (383 aa).

Transmembrane regions (helical) follow at residues 56-76 and 84-104; these read VVYDLTVAFIFYYIATNYFHL and VAWPIYWALQGCVLTGVWVIA. The Histidine box-1 motif lies at 105 to 109; sequence HECGH. The helical transmembrane segment at 117–137 threads the bilayer; the sequence is LLDDIVGLVLHSCLLVPYFSW. The Histidine box-2 motif lies at 141–145; the sequence is HRRHH. 3 consecutive transmembrane segments (helical) span residues 179–199, 225–245, and 249–269; these read LFTLTITLTLGWPLYLAFNVS, IYISDAGVLAVTFGLYRLAAA, and AWVICVYGVPLLIVNAFLVMI. A Histidine box-3 motif is present at residues 315–319; it reads HVAHH.

Belongs to the fatty acid desaturase type 1 family. In terms of tissue distribution, expressed in leaves and seeds.

Its subcellular location is the endoplasmic reticulum membrane. The enzyme catalyses (9Z)-octadecenoyl-CoA + 2 Fe(II)-[cytochrome b5] + O2 + 2 H(+) = (9Z,12Z)-octadecadienoyl-CoA + 2 Fe(III)-[cytochrome b5] + 2 H2O. It carries out the reaction (9Z)-hexadecenoyl-CoA + 2 Fe(II)-[cytochrome b5] + O2 + 2 H(+) = (9Z,12Z)-hexadecadienoyl-CoA + 2 Fe(III)-[cytochrome b5] + 2 H2O. It participates in lipid metabolism; polyunsaturated fatty acid biosynthesis. Functionally, catalyzes the desaturation of oleic acid (18:1(9Z)) to linoleic acid (18:2(9Z,12Z)). This chain is Delta(12)-fatty-acid desaturase FAD2, found in Vernicia fordii (Tung).